The following is a 552-amino-acid chain: CTP synthase (552 aa).

Positions 1–271 are amidoligase domain; the sequence is MASAASSKHL…DAFVVRRLGL (271 aa). Ser-18 contributes to the CTP binding site. Position 18 (Ser-18) interacts with UTP. ATP is bound by residues 19–24 and Asp-76; that span reads SLGKGL. Residues Asp-76 and Glu-145 each contribute to the Mg(2+) site. CTP contacts are provided by residues 152-154, 192-197, and Lys-228; these read DIE and KTKPTQ. Residues 192–197 and Lys-228 contribute to the UTP site; that span reads KTKPTQ. The region spanning 296–546 is the Glutamine amidotransferase type-1 domain; it reads TIALVGKYVD…IEAALKYSAG (251 aa). Gly-359 contributes to the L-glutamine binding site. The active-site Nucleophile; for glutamine hydrolysis is the Cys-386. L-glutamine contacts are provided by residues 387–390, Glu-410, and Arg-472; that span reads LGLQ. Active-site residues include His-519 and Glu-521.

It belongs to the CTP synthase family. In terms of assembly, homotetramer.

The enzyme catalyses UTP + L-glutamine + ATP + H2O = CTP + L-glutamate + ADP + phosphate + 2 H(+). It carries out the reaction L-glutamine + H2O = L-glutamate + NH4(+). It catalyses the reaction UTP + NH4(+) + ATP = CTP + ADP + phosphate + 2 H(+). Its pathway is pyrimidine metabolism; CTP biosynthesis via de novo pathway; CTP from UDP: step 2/2. Its activity is regulated as follows. Allosterically activated by GTP, when glutamine is the substrate; GTP has no effect on the reaction when ammonia is the substrate. The allosteric effector GTP functions by stabilizing the protein conformation that binds the tetrahedral intermediate(s) formed during glutamine hydrolysis. Inhibited by the product CTP, via allosteric rather than competitive inhibition. Functionally, catalyzes the ATP-dependent amination of UTP to CTP with either L-glutamine or ammonia as the source of nitrogen. Regulates intracellular CTP levels through interactions with the four ribonucleotide triphosphates. This is CTP synthase from Thermobifida fusca (strain YX).